The primary structure comprises 64 residues: Lantipeptide Flvbeta.d (64 aa).

A propeptide spans 1–31 (MDNNTEKFNELAAIADESELNEMLDENITGA) (cleaved by FlvT). A cross-link (lanthionine (Ser-Cys); by FlvM2) is located at residues 33 to 37 (STIQC). 2 positions are modified to 2,3-didehydrobutyrine; by FlvM2: threonine 34 and threonine 41. Cross-links (beta-methyllanthionine (Thr-Cys); by FlvM2) lie at residues 44-52 (TILSVVFDC), 55-58 (TSAC), and 59-62 (TPPC). Positions 47–53 (SVVFDCC) form a cross-link, lanthionine (Ser-Cys); by FlvM2.

Post-translationally, contains LL-lanthionine, DL-lanthionine, and DL-beta-methyllanthionine, when coepressed in E.coli with the flavecin synthetase FlvM2.

The protein localises to the secreted. Its function is as follows. Lanthionine-containing peptide that does probably not show antibacterial activity, since its analog [+2]Flvbeta.d does not show antibacterial activity against M.luteus. Also does not show antibiotic activity when tested with [Del2]Flvalpha.a, an analog of Flvalpha.a, which is encoded by the same operon than Flvbeta.d. The bactericidal activity of lantibiotics is based on depolarization of energized bacterial cytoplasmic membranes, initiated by the formation of aqueous transmembrane pores. This Ruminococcus flavefaciens protein is Lantipeptide Flvbeta.d.